The primary structure comprises 149 residues: Lymphocyte antigen 6 complex locus protein G5c (149 aa).

Residues 1 to 41 form the signal peptide; that stretch reads MLFMAGPAASWSLRPLGLHGVPQALCAVLLTVLVMKTLVLG. One can recognise a UPAR/Ly6 domain in the interval 59–149; it reads LNCYRCLLET…NPDNRKNSMH (91 aa). 5 disulfides stabilise this stretch: C61–C88, C64–C73, C80–C106, C115–C132, and C133–C138. An N-linked (GlcNAc...) asparagine glycan is attached at N95.

Forms oligomers. N-glycosylated. Detected in adult brain.

Its subcellular location is the secreted. In terms of biological role, may have a role in hematopoietic cell differentiation. In Mus musculus (Mouse), this protein is Lymphocyte antigen 6 complex locus protein G5c (Ly6g5c).